A 258-amino-acid polypeptide reads, in one-letter code: Phosphate import ATP-binding protein PstB (258 aa).

One can recognise an ABC transporter domain in the interval 13–253; that stretch reads IKIENLNLWY…PREKSTEDYI (241 aa). 45 to 52 contacts ATP; that stretch reads GPSGCGKS.

This sequence belongs to the ABC transporter superfamily. Phosphate importer (TC 3.A.1.7) family. In terms of assembly, the complex is composed of two ATP-binding proteins (PstB), two transmembrane proteins (PstC and PstA) and a solute-binding protein (PstS).

Its subcellular location is the cell membrane. The enzyme catalyses phosphate(out) + ATP + H2O = ADP + 2 phosphate(in) + H(+). Part of the ABC transporter complex PstSACB involved in phosphate import. Responsible for energy coupling to the transport system. In Methanosarcina barkeri (strain Fusaro / DSM 804), this protein is Phosphate import ATP-binding protein PstB.